Here is a 219-residue protein sequence, read N- to C-terminus: Interleukin-12 subunit alpha (219 aa).

An N-terminal signal peptide occupies residues 1 to 22 (MCPARSLLLVATLVLLDYLSLA). Residues Asn24, Asn93, and Asn107 are each glycosylated (N-linked (GlcNAc...) asparagine). 3 cysteine pairs are disulfide-bonded: Cys37/Cys110, Cys64/Cys196, and Cys85/Cys123.

The protein belongs to the IL-6 superfamily. Heterodimer with IL12B; disulfide-linked. This heterodimer is known as interleukin IL-12. Heterodimer with EBI3/IL27B; not disulfide-linked. This heterodimer is known as interleukin IL-35. Interacts with NBR1; this interaction promotes IL-12 secretion.

Its subcellular location is the secreted. Its function is as follows. Heterodimerizes with IL12B to form the IL-12 cytokine or with EBI3/IL27B to form the IL-35 cytokine. IL-12 is primarily produced by professional antigen-presenting cells (APCs) such as B-cells and dendritic cells (DCs) as well as macrophages and granulocytes and regulates T-cell and natural killer-cell responses, induces the production of interferon-gamma (IFN-gamma), favors the differentiation of T-helper 1 (Th1) cells and is an important link between innate resistance and adaptive immunity. Mechanistically, exerts its biological effects through a receptor composed of IL12R1 and IL12R2 subunits. Binding to the receptor results in the rapid tyrosine phosphorylation of a number of cellular substrates including the JAK family kinases TYK2 and JAK2. In turn, recruited STAT4 gets phosphorylated and translocates to the nucleus where it regulates cytokine/growth factor responsive genes. As part of IL-35, plays essential roles in maintaining the immune homeostasis of the liver microenvironment and also functions as an immune-suppressive cytokine. Mediates biological events through unconventional receptors composed of IL12RB2 and gp130/IL6ST heterodimers or homodimers. Signaling requires the transcription factors STAT1 and STAT4, which form a unique heterodimer that binds to distinct DNA sites. The chain is Interleukin-12 subunit alpha (IL12A) from Macaca mulatta (Rhesus macaque).